The sequence spans 95 residues: Ribonuclease kappa-B (95 aa).

2 consecutive transmembrane segments (helical) span residues 12 to 32 (GLIISVWGIIQLVLMGLFFYI) and 68 to 88 (CWIAACIYVLTLLLSAQQFYV).

The protein belongs to the RNase K family.

The protein resides in the membrane. Its activity is regulated as follows. Inhibited by Zn(2+) and Hg(2+), while it is unaffected by Ca(2+). In terms of biological role, endoribonuclease which displays activity against poly(C) and poly(U) synthetic substrates, as well as rRNA. This chain is Ribonuclease kappa-B, found in Ceratitis capitata (Mediterranean fruit fly).